We begin with the raw amino-acid sequence, 225 residues long: Adenylate kinase (225 aa).

10-15 (GSGKGT) contacts ATP. Residues 30–59 (ESGAIFRENISKGTEIGKKAKEYIDRGDLV) are NMP. Residues serine 31, arginine 36, 57–59 (DLV), 85–88 (GFPR), and glutamine 92 contribute to the AMP site. An LID region spans residues 126-165 (GRRLCENDNNHPNNIFIDAIKPDGDKCRVCGGALSARSDD). Arginine 127 is a binding site for ATP. AMP is bound by residues arginine 162 and arginine 174. Proline 211 lines the ATP pocket.

The protein belongs to the adenylate kinase family. As to quaternary structure, monomer.

It is found in the cytoplasm. The enzyme catalyses AMP + ATP = 2 ADP. It functions in the pathway purine metabolism; AMP biosynthesis via salvage pathway; AMP from ADP: step 1/1. In terms of biological role, catalyzes the reversible transfer of the terminal phosphate group between ATP and AMP. Plays an important role in cellular energy homeostasis and in adenine nucleotide metabolism. The protein is Adenylate kinase of Desulfatibacillum aliphaticivorans.